The following is a 489-amino-acid chain: 2-(3-amino-3-carboxypropyl)histidine synthase subunit 2 (489 aa).

Met1 bears the N-acetylmethionine mark. Ser7 is subject to Phosphoserine. Positions 89, 110, and 341 each coordinate [4Fe-4S] cluster. The residue at position 435 (Thr435) is a Phosphothreonine. Residues Ser446 and Ser456 each carry the phosphoserine modification. The residue at position 467 (Thr467) is a Phosphothreonine. Ser488 bears the Phosphoserine mark.

The protein belongs to the DPH1/DPH2 family. DPH2 subfamily. In terms of assembly, component of the 2-(3-amino-3-carboxypropyl)histidine synthase complex composed of DPH1, DPH2, DPH3 and a NADH-dependent reductase. Interacts with DPH1. The cofactor is [4Fe-4S] cluster.

The protein operates within protein modification; peptidyl-diphthamide biosynthesis. In terms of biological role, required for the first step of diphthamide biosynthesis, a post-translational modification of histidine which occurs in elongation factor 2. DPH1 and DPH2 transfer a 3-amino-3-carboxypropyl (ACP) group from S-adenosyl-L-methionine (SAM) to a histidine residue, the reaction is assisted by a reduction system comprising DPH3 and a NADH-dependent reductase. Facilitates the reduction of the catalytic iron-sulfur cluster found in the DPH1 subunit. In Pongo abelii (Sumatran orangutan), this protein is 2-(3-amino-3-carboxypropyl)histidine synthase subunit 2 (DPH2).